A 59-amino-acid polypeptide reads, in one-letter code: UPF0434 protein HEAR2489 (59 aa).

This sequence belongs to the UPF0434 family.

The sequence is that of UPF0434 protein HEAR2489 from Herminiimonas arsenicoxydans.